The primary structure comprises 826 residues: Golgin subfamily A member 6-like protein 25 (826 aa).

Disordered stretches follow at residues 1 to 100, 297 to 327, 345 to 425, 502 to 534, 547 to 646, and 658 to 826; these read MWPQ…HQEA, QEQEEKIREQEEKMRRQEEMMWEKEEKMRRQ, MHEQ…EMWR, QEEMWREEEKMHEQEKIWEEEKRQEQEDKMWRQ, RQEE…EQEE, and QEEM…MQEH. Positions 31–52 are enriched in basic and acidic residues; it reads MSKETRQSKLAEAKEQLTDHHP. Composition is skewed to polar residues over residues 53-63 and 71-83; these read QTNPSVGTAAS and NNGTNPETTTSGG. Basic and acidic residues predominate over residues 86-100; it reads SPEDEQKASHQHQEA. A coiled-coil region spans residues 157-822; it reads LEQALSAVAT…EVRLRQQEEK (666 aa). Composition is skewed to basic and acidic residues over residues 658–678 and 686–826; these read QEEMMQEQEEKMGEQEEKMWE and QEEK…MQEH.

It belongs to the GOLGA6 family.

The sequence is that of Golgin subfamily A member 6-like protein 25 from Homo sapiens (Human).